The sequence spans 480 residues: Proline--tRNA ligase (480 aa).

This sequence belongs to the class-II aminoacyl-tRNA synthetase family. ProS type 3 subfamily. As to quaternary structure, homodimer.

The protein localises to the cytoplasm. It catalyses the reaction tRNA(Pro) + L-proline + ATP = L-prolyl-tRNA(Pro) + AMP + diphosphate. Catalyzes the attachment of proline to tRNA(Pro) in a two-step reaction: proline is first activated by ATP to form Pro-AMP and then transferred to the acceptor end of tRNA(Pro). This is Proline--tRNA ligase from Alkaliphilus oremlandii (strain OhILAs) (Clostridium oremlandii (strain OhILAs)).